Reading from the N-terminus, the 513-residue chain is Protein disulfide-isomerase 2 (513 aa).

The first 20 residues, 1–20, serve as a signal peptide directing secretion; that stretch reads MNKFLALLFVLALFANIAFS. Thioredoxin domains are found at residues 21–147 and 355–486; these read CEGH…EELK and DVIG…DNAA. Active-site nucleophile residues include Cys-70, Cys-73, Cys-406, and Cys-409. Disulfide bonds link Cys-70–Cys-73 and Cys-406–Cys-409. A disordered region spans residues 491–513; that stretch reads LPSSQTDDNVESKKDSSAKHDEL. Residues 500–513 show a composition bias toward basic and acidic residues; the sequence is VESKKDSSAKHDEL. The Prevents secretion from ER motif lies at 510–513; sequence HDEL.

It belongs to the protein disulfide isomerase family.

Its subcellular location is the endoplasmic reticulum lumen. It catalyses the reaction Catalyzes the rearrangement of -S-S- bonds in proteins.. Participates in the folding of proteins containing disulfide bonds, may be involved in glycosylation, prolyl hydroxylation and triglyceride transfer. The polypeptide is Protein disulfide-isomerase 2 (pdi2) (Dictyostelium discoideum (Social amoeba)).